The following is a 364-amino-acid chain: Anthranilate phosphoribosyltransferase (364 aa).

5-phospho-alpha-D-ribose 1-diphosphate is bound by residues glycine 101, 104 to 105, threonine 109, 111 to 114, 129 to 137, and glycine 141; these read GD, NLST, and KHGNRAASS. Anthranilate is bound at residue glycine 101. Residue serine 113 participates in Mg(2+) binding. Residue asparagine 132 coordinates anthranilate. Arginine 187 serves as a coordination point for anthranilate. The Mg(2+) site is built by aspartate 245 and glutamate 246.

The protein belongs to the anthranilate phosphoribosyltransferase family. In terms of assembly, homodimer. Mg(2+) is required as a cofactor.

It carries out the reaction N-(5-phospho-beta-D-ribosyl)anthranilate + diphosphate = 5-phospho-alpha-D-ribose 1-diphosphate + anthranilate. The protein operates within amino-acid biosynthesis; L-tryptophan biosynthesis; L-tryptophan from chorismate: step 2/5. In terms of biological role, catalyzes the transfer of the phosphoribosyl group of 5-phosphorylribose-1-pyrophosphate (PRPP) to anthranilate to yield N-(5'-phosphoribosyl)-anthranilate (PRA). The polypeptide is Anthranilate phosphoribosyltransferase (Mycolicibacterium vanbaalenii (strain DSM 7251 / JCM 13017 / BCRC 16820 / KCTC 9966 / NRRL B-24157 / PYR-1) (Mycobacterium vanbaalenii)).